Consider the following 385-residue polypeptide: cAMP-dependent protein kinase, catalytic subunit-like (385 aa).

The region spanning 63-317 (LERIVTIGKG…TQDVKDHKWF (255 aa)) is the Protein kinase domain. Residues 69–77 (IGKGTFGRV) and Lys92 each bind ATP. Asp186 functions as the Proton acceptor in the catalytic mechanism. The AGC-kinase C-terminal domain occupies 318–385 (EKVNWDDTLH…QRERDLFAEW (68 aa)).

The protein belongs to the protein kinase superfamily. Ser/Thr protein kinase family. cAMP subfamily.

The catalysed reaction is L-seryl-[protein] + ATP = O-phospho-L-seryl-[protein] + ADP + H(+). The enzyme catalyses L-threonyl-[protein] + ATP = O-phospho-L-threonyl-[protein] + ADP + H(+). This is cAMP-dependent protein kinase, catalytic subunit-like from Caenorhabditis briggsae.